A 231-amino-acid chain; its full sequence is eRF1 methyltransferase catalytic subunit mtq2 (231 aa).

S-adenosyl-L-methionine contacts are provided by residues 54 to 58, Asp-80, and Asn-130; that span reads GCGSG. A substrate-binding site is contributed by 130–133; sequence NPPY.

Belongs to the eukaryotic/archaeal PrmC-related family. In terms of assembly, heterodimer of mtq2-trm112. mtq2 is the catalytic subunit carrying the catalytic and the S-adenosyl L-methionine binding sites.

It localises to the cytoplasm. Its subcellular location is the nucleus. The catalysed reaction is L-glutaminyl-[peptide chain release factor] + S-adenosyl-L-methionine = N(5)-methyl-L-glutaminyl-[peptide chain release factor] + S-adenosyl-L-homocysteine + H(+). In terms of biological role, methylates eRF1 on 'Gln-182' using S-adenosyl L-methionine as methyl donor. eRF1 needs to be complexed to eRF3 in its GTP-bound form to be efficiently methylated. The polypeptide is eRF1 methyltransferase catalytic subunit mtq2 (mtq2) (Schizosaccharomyces pombe (strain 972 / ATCC 24843) (Fission yeast)).